The primary structure comprises 226 residues: Thiamine-phosphate synthase (226 aa).

4-amino-2-methyl-5-(diphosphooxymethyl)pyrimidine-binding positions include 46 to 50 (QFRDK) and Asp83. Residues Asp84 and Asp103 each contribute to the Mg(2+) site. Ser122 provides a ligand contact to 4-amino-2-methyl-5-(diphosphooxymethyl)pyrimidine. Position 149-151 (149-151 (TQS)) interacts with 2-[(2R,5Z)-2-carboxy-4-methylthiazol-5(2H)-ylidene]ethyl phosphate. Lys152 contributes to the 4-amino-2-methyl-5-(diphosphooxymethyl)pyrimidine binding site. 2-[(2R,5Z)-2-carboxy-4-methylthiazol-5(2H)-ylidene]ethyl phosphate is bound by residues Gly181 and 201–202 (IT).

This sequence belongs to the thiamine-phosphate synthase family. It depends on Mg(2+) as a cofactor.

The enzyme catalyses 2-[(2R,5Z)-2-carboxy-4-methylthiazol-5(2H)-ylidene]ethyl phosphate + 4-amino-2-methyl-5-(diphosphooxymethyl)pyrimidine + 2 H(+) = thiamine phosphate + CO2 + diphosphate. The catalysed reaction is 2-(2-carboxy-4-methylthiazol-5-yl)ethyl phosphate + 4-amino-2-methyl-5-(diphosphooxymethyl)pyrimidine + 2 H(+) = thiamine phosphate + CO2 + diphosphate. It catalyses the reaction 4-methyl-5-(2-phosphooxyethyl)-thiazole + 4-amino-2-methyl-5-(diphosphooxymethyl)pyrimidine + H(+) = thiamine phosphate + diphosphate. Its pathway is cofactor biosynthesis; thiamine diphosphate biosynthesis; thiamine phosphate from 4-amino-2-methyl-5-diphosphomethylpyrimidine and 4-methyl-5-(2-phosphoethyl)-thiazole: step 1/1. Functionally, condenses 4-methyl-5-(beta-hydroxyethyl)thiazole monophosphate (THZ-P) and 2-methyl-4-amino-5-hydroxymethyl pyrimidine pyrophosphate (HMP-PP) to form thiamine monophosphate (TMP). This is Thiamine-phosphate synthase from Haemophilus influenzae (strain 86-028NP).